The primary structure comprises 622 residues: C6 finger transcription factor fumR (622 aa).

The segment at residues 94–123 is a DNA-binding region (zn(2)-C6 fungal-type); sequence CDRCHGQKLRCRRENNSDTCVRCARAGVRC. 4 disordered regions span residues 127-175, 206-248, 299-360, and 556-585; these read PMRL…HSDH, ALTA…APNL, FDQA…SNSI, and PATG…DAGD. Composition is skewed to polar residues over residues 148-167, 217-226, and 347-360; these read PANG…GPND, VHTSQPSGPQ, and RGNS…SNSI. The span at 556–571 shows a compositional bias: low complexity; sequence PATGSASKTAASGPPA.

The protein resides in the nucleus. Its function is as follows. Transcription factor that regulates the expression of the gene clusters that mediate the biosynthesis of pseurotin and fumagillin. This Aspergillus fumigatus (strain ATCC MYA-4609 / CBS 101355 / FGSC A1100 / Af293) (Neosartorya fumigata) protein is C6 finger transcription factor fumR.